The following is a 222-amino-acid chain: Triosephosphate isomerase (222 aa).

9–11 (NYK) lines the substrate pocket. The Electrophile role is filled by His93. The Proton acceptor role is filled by Glu141. Substrate is bound by residues Ile146, Gly181, and 202-203 (AS).

It belongs to the triosephosphate isomerase family. As to quaternary structure, homotetramer; dimer of dimers.

The protein localises to the cytoplasm. It carries out the reaction D-glyceraldehyde 3-phosphate = dihydroxyacetone phosphate. It participates in carbohydrate biosynthesis; gluconeogenesis. The protein operates within carbohydrate degradation; glycolysis; D-glyceraldehyde 3-phosphate from glycerone phosphate: step 1/1. In terms of biological role, involved in the gluconeogenesis. Catalyzes stereospecifically the conversion of dihydroxyacetone phosphate (DHAP) to D-glyceraldehyde-3-phosphate (G3P). The polypeptide is Triosephosphate isomerase (Methanosarcina mazei (strain ATCC BAA-159 / DSM 3647 / Goe1 / Go1 / JCM 11833 / OCM 88) (Methanosarcina frisia)).